The sequence spans 268 residues: Indole-3-glycerol phosphate synthase (268 aa).

It belongs to the TrpC family.

It carries out the reaction 1-(2-carboxyphenylamino)-1-deoxy-D-ribulose 5-phosphate + H(+) = (1S,2R)-1-C-(indol-3-yl)glycerol 3-phosphate + CO2 + H2O. It functions in the pathway amino-acid biosynthesis; L-tryptophan biosynthesis; L-tryptophan from chorismate: step 4/5. This is Indole-3-glycerol phosphate synthase from Parafrankia sp. (strain EAN1pec).